We begin with the raw amino-acid sequence, 130 residues long: Protein ApaG (130 aa).

The region spanning Ser-3–Gln-127 is the ApaG domain.

This Beijerinckia indica subsp. indica (strain ATCC 9039 / DSM 1715 / NCIMB 8712) protein is Protein ApaG.